The following is a 329-amino-acid chain: MAEKSFNLYRYSIPVDSQLILRDRFLKRREGLIVRVSCSRDGWGEIAPLPGFSEETLDQAQEQAIEWLTTWCNASCDAPRVPLDGTYPSVAFGISCAMDEMKGYLQAEGNYHTAPLCYGDPDELYAKLASMEGEKVAKMKVGIYEANRDGLIADMFLEAIPDLQLRLDANRHWSLEKALQFAAKVKLQHRKRIQFLEEPCKTQALSREFAVQTDIAIAWDESVREPNFCLEKEPHLSAVVIKPTLIGSIQRCTELINQAHSLGLKAVISSSIESSLGLSQLARIAQQYTPNVTPGLDTLDLMEYQVLRAWPSSDLPIVDLESEFITKII.

Catalysis depends on K140, which acts as the Proton donor. Mg(2+)-binding residues include D168, E197, and D220. K242 (proton acceptor) is an active-site residue.

It belongs to the mandelate racemase/muconate lactonizing enzyme family. MenC type 1 subfamily. A divalent metal cation is required as a cofactor.

The enzyme catalyses (1R,6R)-6-hydroxy-2-succinyl-cyclohexa-2,4-diene-1-carboxylate = 2-succinylbenzoate + H2O. Its pathway is quinol/quinone metabolism; 1,4-dihydroxy-2-naphthoate biosynthesis; 1,4-dihydroxy-2-naphthoate from chorismate: step 4/7. The protein operates within quinol/quinone metabolism; menaquinone biosynthesis. Converts 2-succinyl-6-hydroxy-2,4-cyclohexadiene-1-carboxylate (SHCHC) to 2-succinylbenzoate (OSB). This is o-succinylbenzoate synthase from Haemophilus influenzae (strain ATCC 51907 / DSM 11121 / KW20 / Rd).